The following is a 271-amino-acid chain: Phosphatidylglycerol--prolipoprotein diacylglyceryl transferase (271 aa).

Transmembrane regions (helical) follow at residues 21–41 (LAVRWYGLMYLVGFLFAMWLA), 60–80 (LLFAGFLGVVIGGRVGYVIFY), 95–115 (VWTGGMSFHGGLLGVITAMFW), 124–144 (FFGVADFVAPLVPFGLGMGRI), 177–197 (QLYEFALEGVVLFFILNWFIG), 203–223 (GSVSGLFLAGYGTFRFLVEYV), and 236–256 (FISMGQILSLPMVIIGILMMV). A 1,2-diacyl-sn-glycero-3-phospho-(1'-sn-glycerol) is bound at residue Arg143.

Belongs to the Lgt family.

It is found in the cell inner membrane. The enzyme catalyses L-cysteinyl-[prolipoprotein] + a 1,2-diacyl-sn-glycero-3-phospho-(1'-sn-glycerol) = an S-1,2-diacyl-sn-glyceryl-L-cysteinyl-[prolipoprotein] + sn-glycerol 1-phosphate + H(+). It functions in the pathway protein modification; lipoprotein biosynthesis (diacylglyceryl transfer). Catalyzes the transfer of the diacylglyceryl group from phosphatidylglycerol to the sulfhydryl group of the N-terminal cysteine of a prolipoprotein, the first step in the formation of mature lipoproteins. The chain is Phosphatidylglycerol--prolipoprotein diacylglyceryl transferase from Vibrio cholerae serotype O1 (strain ATCC 39541 / Classical Ogawa 395 / O395).